A 238-amino-acid chain; its full sequence is 7-cyano-7-deazaguanine synthase (238 aa).

15–25 (FSGGQDSTTCL) contacts ATP. Cysteine 203, cysteine 218, cysteine 221, and cysteine 224 together coordinate Zn(2+).

Belongs to the QueC family. Zn(2+) is required as a cofactor.

The catalysed reaction is 7-carboxy-7-deazaguanine + NH4(+) + ATP = 7-cyano-7-deazaguanine + ADP + phosphate + H2O + H(+). It participates in purine metabolism; 7-cyano-7-deazaguanine biosynthesis. In terms of biological role, catalyzes the ATP-dependent conversion of 7-carboxy-7-deazaguanine (CDG) to 7-cyano-7-deazaguanine (preQ(0)). The polypeptide is 7-cyano-7-deazaguanine synthase (Alkalilimnicola ehrlichii (strain ATCC BAA-1101 / DSM 17681 / MLHE-1)).